The chain runs to 438 residues: Protein SPMIP7 (438 aa).

In terms of tissue distribution, testis-specific.

Functionally, essential for normal spermatogenesis. The sequence is that of Protein SPMIP7 from Homo sapiens (Human).